Here is a 420-residue protein sequence, read N- to C-terminus: Histidine--tRNA ligase (420 aa).

The protein belongs to the class-II aminoacyl-tRNA synthetase family. In terms of assembly, homodimer.

The protein localises to the cytoplasm. It carries out the reaction tRNA(His) + L-histidine + ATP = L-histidyl-tRNA(His) + AMP + diphosphate + H(+). This chain is Histidine--tRNA ligase, found in Mycobacterium marinum (strain ATCC BAA-535 / M).